A 505-amino-acid chain; its full sequence is MKNEKRKSGIEPKVFFPPLIIVGILCWLTVRDLDAANIVINAVFSYVTNIWGWAFEWYMVVMLFGWFWLVFGPYAKKRLGDEPPEFSTASWIFMMFASCTSAAVLFWGSIEIYYYISTPPFALAPGSNGAKEIGLAYSLFHWGPLPWATYSFLSVAFAYFFFVRKMDVIRPSSTLVPLVGEKHAKGLFGTIVDNFYLVALIFAMGTSLGLATPLVTECMQYLFGIPHTLELDAIIITCWIVLNAICVACGLQKGVKIASDVRSYLSFLMLGWVFIVSGASFIMNYFTDSVGMLLMYLPRMLFYTDAIGKGGFPQGWTVFYWAWWVIYAIQMSIFLARISRGRTVRELCFGMVLGLTASTWILWTVLGSNTLLLMDKNILNIPQLIEQHGVARAIIETWAALPFSTATMWGFFILCFIATVTLINACSYTLAMSTCREVRDGEEPPLLVRIGWSVLVGVIGIVLLALGGLKPIQTAIIAGGCPLFFVNIMVTLSFIKDAKVHWKDK.

12 helical membrane passes run 10 to 30 (IEPK…WLTV), 50 to 70 (IWGW…FWLV), 92 to 112 (IFMM…SIEI), 143 to 163 (GPLP…FFFV), 195 to 215 (FYLV…TPLV), 231 to 251 (LDAI…ACGL), 263 to 283 (SYLS…SFIM), 316 to 336 (WTVF…IFLA), 347 to 367 (LCFG…TVLG), 403 to 423 (FSTA…VTLI), 446 to 466 (LLVR…LLAL), and 475 to 495 (AIIA…LSFI).

The protein belongs to the BCCT transporter (TC 2.A.15) family. CaiT subfamily. In terms of assembly, homotrimer.

The protein localises to the cell inner membrane. The catalysed reaction is 4-(trimethylamino)butanoate(in) + (R)-carnitine(out) = 4-(trimethylamino)butanoate(out) + (R)-carnitine(in). It participates in amine and polyamine metabolism; carnitine metabolism. In terms of biological role, catalyzes the exchange of L-carnitine for gamma-butyrobetaine. The sequence is that of L-carnitine/gamma-butyrobetaine antiporter from Citrobacter koseri (strain ATCC BAA-895 / CDC 4225-83 / SGSC4696).